The chain runs to 595 residues: Neuroepithelial cell-transforming gene 1 protein (595 aa).

Met1 carries the N-acetylmethionine modification. The tract at residues Met1–Glu42 is disordered. Residues Met1 to Asp74 are necessary for nuclear localization. The Nuclear localization signal signature appears at Arg12 to Arg19. A Phosphoserine modification is found at Ser21. Positions Lys66 to Lys72 match the Nuclear localization signal motif. Ser100, Ser106, and Ser122 each carry phosphoserine. Residues Gly127–Arg151 form a disordered region. Over residues Ala133–Thr146 the composition is skewed to polar residues. The region spanning Lys174–Lys356 is the DH domain. A PH domain is found at Val386–Ala501. Phosphoserine is present on Ser508. Positions Cys555–Val595 are disordered.

In terms of assembly, interacts with RHOA in its GTP- and GDP-bound states, and with CDC42 in its GTP-bound state. Interacts with the PDZ 1 domain of BAIAP1.

It is found in the cytoplasm. Its subcellular location is the nucleus. Functionally, acts as a guanine nucleotide exchange factor (GEF) for RhoA GTPase. May be involved in activation of the SAPK/JNK pathway. Stimulates genotoxic stress-induced RHOB activity in breast cancer cells leading to their cell death. This Mus musculus (Mouse) protein is Neuroepithelial cell-transforming gene 1 protein (Net1).